The following is a 393-amino-acid chain: Phosphopentomutase (393 aa).

Mn(2+) is bound by residues Asp-14, Asp-287, His-292, Asp-328, His-329, and His-340.

It belongs to the phosphopentomutase family. It depends on Mn(2+) as a cofactor.

The protein localises to the cytoplasm. It carries out the reaction 2-deoxy-alpha-D-ribose 1-phosphate = 2-deoxy-D-ribose 5-phosphate. The catalysed reaction is alpha-D-ribose 1-phosphate = D-ribose 5-phosphate. Its pathway is carbohydrate degradation; 2-deoxy-D-ribose 1-phosphate degradation; D-glyceraldehyde 3-phosphate and acetaldehyde from 2-deoxy-alpha-D-ribose 1-phosphate: step 1/2. Functionally, isomerase that catalyzes the conversion of deoxy-ribose 1-phosphate (dRib-1-P) and ribose 1-phosphate (Rib-1-P) to deoxy-ribose 5-phosphate (dRib-5-P) and ribose 5-phosphate (Rib-5-P), respectively. The sequence is that of Phosphopentomutase from Geobacillus stearothermophilus (Bacillus stearothermophilus).